A 210-amino-acid chain; its full sequence is MVRRTKEEAQETRAQIIEAAERAFYKRGVARTTLADIAELAGVTRGAIYWHFNNKAELVQALLDSLHETHDHLARASESEDEVDPLGCMRKLLLQVFNELVLDARTRRINEILHHKCEFTDDMCEIRQQRQSAVLDCHKGITLALANAVRRGQLPGELDAERAAVAMFAYVDGLIRRWLLLPDSVDLLGDVEKWVDTGLDMLRLSPALRK.

In terms of domain architecture, HTH tetR-type spans 10-70; the sequence is QETRAQIIEA…ALLDSLHETH (61 aa). Positions 33–52 form a DNA-binding region, H-T-H motif; that stretch reads TLADIAELAGVTRGAIYWHF.

In terms of assembly, homodimer.

In terms of biological role, represses expression from the ttgABC operon promoter and its own expression. Binds to a promoter region between the divergently transcribed ttgR and ttgABC genes/operons; in the presence of chloramphenicol or tetracycline this binding no longer occurs and ttgR and ttgABC are derepressed. This suggests that TtgR binds these antibiotics. In Pseudomonas putida (strain DOT-T1E), this protein is HTH-type transcriptional regulator TtgR (ttgR).